A 338-amino-acid polypeptide reads, in one-letter code: Anthranilate phosphoribosyltransferase (338 aa).

Residues Gly81, 84–85, Thr89, 91–94, 109–117, and Ala121 contribute to the 5-phospho-alpha-D-ribose 1-diphosphate site; these read GD, NIST, and KHGNRNLSS. Gly81 lines the anthranilate pocket. Residue Ser93 coordinates Mg(2+). Asn112 provides a ligand contact to anthranilate. Residue Arg167 coordinates anthranilate. Positions 226 and 227 each coordinate Mg(2+).

The protein belongs to the anthranilate phosphoribosyltransferase family. Homodimer. Mg(2+) is required as a cofactor.

The enzyme catalyses N-(5-phospho-beta-D-ribosyl)anthranilate + diphosphate = 5-phospho-alpha-D-ribose 1-diphosphate + anthranilate. The protein operates within amino-acid biosynthesis; L-tryptophan biosynthesis; L-tryptophan from chorismate: step 2/5. Functionally, catalyzes the transfer of the phosphoribosyl group of 5-phosphorylribose-1-pyrophosphate (PRPP) to anthranilate to yield N-(5'-phosphoribosyl)-anthranilate (PRA). This chain is Anthranilate phosphoribosyltransferase, found in Cereibacter sphaeroides (strain ATCC 17025 / ATH 2.4.3) (Rhodobacter sphaeroides).